We begin with the raw amino-acid sequence, 1148 residues long: Envelopment polyprotein (1148 aa).

The N-terminal stretch at 1–23 is a signal peptide; it reads MGKSSPVCLYLILQGLLLFDTVN. Residues 24–496 lie on the Lumenal side of the membrane; sequence AKNLNELKME…PGLHGWATVL (473 aa). 6 cysteine pairs are disulfide-bonded: Cys-34/Cys-159, Cys-68/Cys-165, Cys-117/Cys-136, Cys-141/Cys-146, Cys-183/Cys-193, and Cys-218/Cys-257. The N-linked (GlcNAc...) asparagine; by host glycan is linked to Asn-142. Asn-357 carries an N-linked (GlcNAc...) asparagine; by host glycan. Cystine bridges form between Cys-386–Cys-445, Cys-390–Cys-399, Cys-415–Cys-434, and Cys-462–Cys-485. N-linked (GlcNAc...) asparagine; by host glycosylation is present at Asn-409. The helical transmembrane segment at 497-517 threads the bilayer; it reads LLLTFCFGWVLIPTITMILLK. Residues 518–637 are Cytoplasmic-facing; the sequence is ILIAFAYLCS…LSLFRYRSRF (120 aa). The interval 526-543 is binding to the ribonucleoprotein; the sequence is CSKYNTDSKFRILVEKVK. CCHC-type zinc fingers lie at residues 555–575 and 580–601; these read CEVC…RKSC and CPYC…FKVC. Binding to the ribonucleoprotein stretches follow at residues 598-615 and 621-635; these read FKVC…KKSL and MQGC…RYRS. Residues 621–644 enclose the ITAM domain; sequence MQGCYRTLSLFRYRSRFFVGLVWC. Residues 625–628 carry the YxxL motif; sequence YRTL. A helical transmembrane segment spans residues 638 to 658; the sequence is FVGLVWCMLLVLELIVWAASA. The Lumenal portion of the chain corresponds to 659–1115; the sequence is ETQNLNDGWT…WVLGVLNGNW (457 aa). Disulfide bonds link Cys-745–Cys-780, Cys-749–Cys-787, Cys-761–Cys-894, Cys-775–Cys-905, Cys-790–Cys-913, Cys-816–Cys-825, Cys-833–Cys-842, and Cys-873–Cys-877. Residues 767–787 form a fusion loop region; the sequence is YEYETGWGCNPPDCPGVGTGC. An N-linked (GlcNAc...) asparagine; by host glycan is attached at Asn-937. 5 disulfides stabilise this stretch: Cys-979–Cys-1009, Cys-1002–Cys-1054, Cys-1019–Cys-1024, Cys-1055–Cys-1060, and Cys-1094–Cys-1098. The helical transmembrane segment at 1116 to 1136 threads the bilayer; the sequence is MVVAVLIALLILSIFLFALCC. A binding to the ribonucleoprotein region spans residues 1131-1148; the sequence is LFALCCPRRPSYKKDHKP. Residues 1137–1148 are Cytoplasmic-facing; that stretch reads PRRPSYKKDHKP.

Belongs to the hantavirus envelope glycoprotein family. As to quaternary structure, homodimer. Homotetramer; forms heterotetrameric Gn-Gc spikes in the pre-fusion conformation. Interacts (via C-terminus) with the nucleoprotein. Interacts with host TUFM; this interaction contributes to the virus-induced degradation of mitochondria by autophagy, which leads to degradation of host MAVS and inhibition of type I interferon (IFN) responses. Interacts with host MAP1LC3B; this interaction contributes to the virus-induced degradation of mitochondria by autophagy, which leads to degradation of host MAVS and inhibition of type I interferon (IFN) responses. Homodimer. Homotetramer; forms heterotetrameric Gn-Gc spikes in the pre-fusion conformation. Homotrimer; forms homotrimer in the post-fusion conformation at acidic pH. Interacts (via C-terminus) with the nucleoprotein. Envelope polyprotein precursor is quickly cleaved in vivo just after synthesis, presumably by host signal peptidase.

Its subcellular location is the virion membrane. The protein resides in the host cell surface. The protein localises to the host Golgi apparatus membrane. It localises to the host endoplasmic reticulum membrane. It is found in the host mitochondrion. In terms of biological role, forms homotetramers with glycoprotein C at the surface of the virion. Attaches the virion to host cell receptors including integrin ITGAV/ITGB3. This attachment induces virion internalization predominantly through clathrin-dependent endocytosis. Mediates the assembly and budding of infectious virus particles through its interaction with the nucleocapsid protein and the viral genome. May dysregulate normal immune and endothelial cell responses through an ITAM motif. Translocates to mitochondria, binds to host TUFM and recruits MAP1LC3B. These interactions induce mitochondrial autophagy and therefore destruction of host MAVS leading to inhibition of type I interferon (IFN) responses. Concomitant breakdown of glycoprotein N is apparently prevented by the nucleoprotein that may inhibit Gn-stimulated autophagosome-lysosome fusion. Interacts with the viral genomic RNA. Functionally, forms heterooctamers with glycoprotein N at the surface of the virion. Attaches the virion to host cell receptors including integrin ITGAV/ITGB3. This attachment induces virion internalization predominantly through clathrin-dependent endocytosis. Class II fusion protein that promotes fusion of viral membrane with host endosomal membrane after endocytosis of the virion. In Homo sapiens (Human), this protein is Envelopment polyprotein (GP).